The following is a 338-amino-acid chain: Glycerol-3-phosphate dehydrogenase [NAD(P)+] (338 aa).

NADPH-binding residues include Ser13, Trp14, and Lys108. Residues Lys108, Gly139, and Ser141 each contribute to the sn-glycerol 3-phosphate site. Position 143 (Ala143) interacts with NADPH. Residues Lys194, Asp247, Ser257, Arg258, and Asn259 each contribute to the sn-glycerol 3-phosphate site. Lys194 acts as the Proton acceptor in catalysis. Arg258 is a binding site for NADPH. Val282 and Glu284 together coordinate NADPH.

The protein belongs to the NAD-dependent glycerol-3-phosphate dehydrogenase family.

Its subcellular location is the cytoplasm. It catalyses the reaction sn-glycerol 3-phosphate + NAD(+) = dihydroxyacetone phosphate + NADH + H(+). It carries out the reaction sn-glycerol 3-phosphate + NADP(+) = dihydroxyacetone phosphate + NADPH + H(+). It participates in membrane lipid metabolism; glycerophospholipid metabolism. Its function is as follows. Catalyzes the reduction of the glycolytic intermediate dihydroxyacetone phosphate (DHAP) to sn-glycerol 3-phosphate (G3P), the key precursor for phospholipid synthesis. This chain is Glycerol-3-phosphate dehydrogenase [NAD(P)+], found in Streptococcus pyogenes serotype M28 (strain MGAS6180).